Reading from the N-terminus, the 292-residue chain is Protease HtpX (292 aa).

Helical transmembrane passes span 4–24 (IALF…VLSL) and 34–54 (GLMI…LLMS). His139 lines the Zn(2+) pocket. Glu140 is an active-site residue. His143 contributes to the Zn(2+) binding site. 2 helical membrane passes run 158-178 (IVNT…AGFL) and 192-212 (MIYF…ASII). Position 221 (Glu221) interacts with Zn(2+).

It belongs to the peptidase M48B family. Zn(2+) is required as a cofactor.

The protein resides in the cell inner membrane. This chain is Protease HtpX, found in Serratia proteamaculans (strain 568).